The sequence spans 331 residues: Type II secretion system protein K (331 aa).

A propeptide spans 1-9 (leader sequence); it reads MPSCRRQGG. Residues 8-27 traverse the membrane as a helical segment; it reads GGMALLVVLLILSVMVIIAS. Residues 28 to 331 lie on the Periplasmic side of the membrane; sequence NMSGRLQLEL…MLRRLNGGAE (304 aa).

The protein belongs to the GSP K family. In terms of assembly, type II secretion is composed of four main components: the outer membrane complex, the inner membrane complex, the cytoplasmic secretion ATPase and the periplasm-spanning pseudopilus. Interacts with core component ExeG. In terms of processing, cleaved by prepilin peptidase.

The protein localises to the cell inner membrane. Functionally, component of the type II secretion system required for the energy-dependent secretion of extracellular factors such as proteases and toxins from the periplasm. Plays a role in pseudopilus assembly and seems to control its length. Interacts with the pseudopilus tip complex that is critical for the recognition and binding of secretion substrates. This Aeromonas hydrophila protein is Type II secretion system protein K (exeK).